We begin with the raw amino-acid sequence, 595 residues long: Sucrose transport protein SUT4 (595 aa).

Residues 1–61 (MDSAAGGGGL…PAARTTTTRK (61 aa)) are Cytoplasmic-facing. The interval 29–55 (SLNGGTPRGGSPKDPDATHQQGPPAAR) is disordered. The helical transmembrane segment at 62–82 (LVLACMVAAGVQFGWALQLSL) threads the bilayer. Topologically, residues 83–97 (LTPYIQTLGIDHAMA) are extracellular. The chain crosses the membrane as a helical span at residues 98 to 118 (SFIWLCGPITGFVVQPCVGVW). Over 119–130 (SDKCRSKYGRRR) the chain is Cytoplasmic. Residues 131 to 151 (PFILAGCLMICFAVTLIGFSA) form a helical membrane-spanning segment. Residues 152–173 (DLGYILGDTTEHCSTYKGSRFR) lie on the Extracellular side of the membrane. The chain crosses the membrane as a helical span at residues 174–194 (AAIIFVLGFWMLDLANNTVQG). Residues 195-213 (PARALLADLSGPDQCNSAN) are Cytoplasmic-facing. A helical membrane pass occupies residues 214-234 (AIFCTWMAVGNVLGFSSGASG). The Extracellular portion of the chain corresponds to 235–256 (NWHKWFPFLMTRACCEACSNLK). A helical membrane pass occupies residues 257-277 (AAFLVAVVFLLFCMSVTLYFA). Over 278 to 365 (EEIPLEPTDA…LTSMRHLPPG (88 aa)) the chain is Cytoplasmic. The disordered stretch occupies residues 291–340 (SDSAPLLNGSRDDNNASNEPRNGALPNGHTDGSNVPANSNAEDSNSNREN). The span at 320 to 334 (TDGSNVPANSNAEDS) shows a compositional bias: polar residues. The helical transmembrane segment at 366–386 (MYSVLLVMALTWLSWFPFFLF) threads the bilayer. Residues 387-417 (DTDWMGREVYHGDPNGNLSERKAYDNGVREG) are Extracellular-facing. N403 carries an N-linked (GlcNAc...) asparagine glycan. The helical transmembrane segment at 418–438 (AFGLLLNSVVLGIGSFLVDPL) threads the bilayer. Residues 439–447 (CRLMGARLV) lie on the Cytoplasmic side of the membrane. Residues 448-468 (WAISNFTVFICMLATAILSWI) traverse the membrane as a helical segment. The Extracellular segment spans residues 469-491 (SFDLYSSKLHHIIGANKTVKNSA). N484 is a glycosylation site (N-linked (GlcNAc...) asparagine). The chain crosses the membrane as a helical span at residues 492 to 512 (LIVFSLLGLPLSITYSVPFSV). Residues 513–525 (TAELTAGTGGGQG) lie on the Cytoplasmic side of the membrane. The helical transmembrane segment at 526–546 (LATGVLNLAIVVPQIVVSLGA) threads the bilayer. Over 547-556 (GPWDALFGGG) the chain is Extracellular. The helical transmembrane segment at 557–577 (NVPAFALASVFSLGAGVLAVL) threads the bilayer. Residues 578–595 (KLPKLPNSYRSAGFHGFG) lie on the Cytoplasmic side of the membrane.

It belongs to the glycoside-pentoside-hexuronide (GPH) cation symporter transporter (TC 2.A.2.4) family. Homodimer.

The protein resides in the cell membrane. It functions in the pathway glycan biosynthesis; sucrose metabolism. Functionally, responsible for the transport of sucrose into the cell, with the concomitant uptake of protons (symport system). May also transport other glucosides. The sequence is that of Sucrose transport protein SUT4 (SUT4) from Oryza sativa subsp. indica (Rice).